A 242-amino-acid polypeptide reads, in one-letter code: MWDNAEAMERLTRWLLVMMAMLLAASGLVWFYNSNHLPVKQVSLKGNLVYSDKKALGSLAKEYIHGNILRTDINGAQEAYRRYPWIASVMVRRRFPDTVEVVLTERKPVARWGDHALVDGEGNVFEARLDRPGMPVFRGAEGTSAEMLRRYDEFSTVLAKQGLGIKEMTYTARSAWNVVLDNGITVRLGRENEMKRLRLFTEAWQHLLRKNKNRLSYVDMRYKDGFSVRHAPDGLPEKESEE.

Over 1-12 the chain is Cytoplasmic; the sequence is MWDNAEAMERLT. A helical transmembrane segment spans residues 13 to 32; it reads RWLLVMMAMLLAASGLVWFY. Topologically, residues 33-242 are periplasmic; the sequence is NSNHLPVKQV…DGLPEKESEE (210 aa). The POTRA domain occupies 37–106; it reads LPVKQVSLKG…DTVEVVLTER (70 aa).

It belongs to the FtsQ/DivIB family. FtsQ subfamily. Part of a complex composed of FtsB, FtsL and FtsQ.

The protein localises to the cell inner membrane. In terms of biological role, essential cell division protein. May link together the upstream cell division proteins, which are predominantly cytoplasmic, with the downstream cell division proteins, which are predominantly periplasmic. May control correct divisome assembly. This is Cell division protein FtsQ from Neisseria gonorrhoeae (strain ATCC 700825 / FA 1090).